Consider the following 249-residue polypeptide: Histone H1 (249 aa).

Low complexity-rich tracts occupy residues 1 to 19 (MSDS…QTAS) and 27 to 43 (KKPA…TTAP). Disordered stretches follow at residues 1–53 (MSDS…QQMV) and 105–249 (QTKG…ATKK). The 75-residue stretch at 45–119 (THPPTQQMVD…GASGSFKLSA (75 aa)) folds into the H15 domain. Positions 121 to 134 (SKKEPKPKVSSVEK) are enriched in basic and acidic residues. The span at 146–158 (AKKKTISATKKPK) shows a compositional bias: basic residues. A compositionally biased stretch (basic and acidic residues) spans 173-190 (KSVDKKKAEKAKAKDAKK). Low complexity predominate over residues 195–233 (KAKPTTAKAKSSAAKPKTPKPKTTSAKPKKVVAAASPKK). Over residues 234–249 (AAAKKPKAKTASATKK) the composition is skewed to basic residues.

Belongs to the histone H1/H5 family.

The protein resides in the nucleus. It localises to the chromosome. In terms of biological role, histones H1 are necessary for the condensation of nucleosome chains into higher-order structures. The polypeptide is Histone H1 (His1) (Drosophila hydei (Fruit fly)).